We begin with the raw amino-acid sequence, 165 residues long: Large ribosomal subunit protein uL10 (165 aa).

Belongs to the universal ribosomal protein uL10 family. As to quaternary structure, part of the ribosomal stalk of the 50S ribosomal subunit. The N-terminus interacts with L11 and the large rRNA to form the base of the stalk. The C-terminus forms an elongated spine to which L12 dimers bind in a sequential fashion forming a multimeric L10(L12)X complex.

In terms of biological role, forms part of the ribosomal stalk, playing a central role in the interaction of the ribosome with GTP-bound translation factors. This chain is Large ribosomal subunit protein uL10, found in Yersinia pseudotuberculosis serotype IB (strain PB1/+).